The sequence spans 265 residues: 3-methyl-2-oxobutanoate hydroxymethyltransferase (265 aa).

The Mg(2+) site is built by D45 and D84. 3-methyl-2-oxobutanoate contacts are provided by residues 45–46 (DS), D84, and K112. E114 contributes to the Mg(2+) binding site. Residue E181 is the Proton acceptor of the active site.

The protein belongs to the PanB family. Homodecamer; pentamer of dimers. Requires Mg(2+) as cofactor.

Its subcellular location is the cytoplasm. It catalyses the reaction 3-methyl-2-oxobutanoate + (6R)-5,10-methylene-5,6,7,8-tetrahydrofolate + H2O = 2-dehydropantoate + (6S)-5,6,7,8-tetrahydrofolate. The protein operates within cofactor biosynthesis; (R)-pantothenate biosynthesis; (R)-pantoate from 3-methyl-2-oxobutanoate: step 1/2. Catalyzes the reversible reaction in which hydroxymethyl group from 5,10-methylenetetrahydrofolate is transferred onto alpha-ketoisovalerate to form ketopantoate. The sequence is that of 3-methyl-2-oxobutanoate hydroxymethyltransferase from Yersinia pseudotuberculosis serotype O:1b (strain IP 31758).